The primary structure comprises 221 residues: Orotate phosphoribosyltransferase (221 aa).

5-phospho-alpha-D-ribose 1-diphosphate is bound at residue Lys26. Position 34–35 (Phe34–Phe35) interacts with orotate. 5-phospho-alpha-D-ribose 1-diphosphate-binding positions include Tyr72 to Lys73, Arg99, Lys100, Lys103, His105, and Asp124 to Ala132. Positions 128 and 156 each coordinate orotate.

This sequence belongs to the purine/pyrimidine phosphoribosyltransferase family. PyrE subfamily. Homodimer. Mg(2+) serves as cofactor.

It catalyses the reaction orotidine 5'-phosphate + diphosphate = orotate + 5-phospho-alpha-D-ribose 1-diphosphate. It participates in pyrimidine metabolism; UMP biosynthesis via de novo pathway; UMP from orotate: step 1/2. Catalyzes the transfer of a ribosyl phosphate group from 5-phosphoribose 1-diphosphate to orotate, leading to the formation of orotidine monophosphate (OMP). This chain is Orotate phosphoribosyltransferase, found in Colwellia psychrerythraea (strain 34H / ATCC BAA-681) (Vibrio psychroerythus).